Reading from the N-terminus, the 2013-residue chain is MWILALSLFQSFANVFSEEPHSSLYFVNASLQEVVFASTSGTLVPCPAAGIPPVTLRWYLATGEEIYDVPGIRHVHPNGTLQIFPFPPSSFSTLIHDNTYYCTAENPSGKIRSQDVHIKAVLREPYTVRVEDQKTMRGNVAVFKCIIPSSVEAYVTVVSWEKDTVSLVSGSRFLITSTGALYIKDVQNEDGLYNYRCITRHRYTGETRQSNSARLFVSDPANSAPSILDGFDHRKAMAGQRVELPCKALGHPEPDYRWLKDNMPLELSGRFQKTVTGLLIENSRPSDSGSYVCEVSNRYGTAKVIGRLYVKQPLKATISPRKVKSSVGSQVSLSCSVTGNEDQELSWYRNGEILNPGKNVRITGLNHANLIMDHMVKSDGGAYQCFVRKDKLSAQDYVQVVLEDGTPKIISAFSEKVVSPAEPVSLVCNVKGTPLPTVTWTLDDDPILKGSGHRISQMITSEGNVVSYLNISSSQVRDGGVYRCTANNSAGVVLYQARINVRGPASIRPMKNITAIAGRDTYIHCRVIGYPYYSIKWYKNANLLPFNHRQVAFENNGTLKLSDVQKEVDEGEYTCNVLVQPQLSTSQSVHVTVKVPPFIQPFEFPRFSIGQRVFIPCVVVSGDLPITITWQKDGRPIPASLGVTIDNIDFTSSLRISNLSLMHNGNYTCIARNEAAAVEHQSQLIVRVPPKFVVQPRDQDGIYGKAVILNCSAEGYPVPTIVWKFSKGAGVPQFQPIALNGRIQVLSNGSLLIKHVVEEDSGYYLCKVSNDVGADVSKSMYLTVKIPAMITSYPNTTLATQGQRKEMSCTAHGEKPIIVRWEKEDRIINPEMARYLVSTKEVGEEVISTLQILPTVREDSGFFSCHAINSYGEDRGIIQLTVQEPPDPPEIEIKDVKARTITLRWTMGFDGNSPITGYDIECKNKSDSWDSAQRTKDVSPQLNSATIIDIHPSSTYSIRMYAKNRIGKSEPSNEITITADEAAPDGPPQEVHLEPTSSQSIRVTWKAPKKHLQNGIIRGYQIGYREYSTGGNFQFNIISIDTTGDSEVYTLDNLNKFTQYGLVVQACNRAGTGPSSQEIITTTLEDVPSYPPENVQAIATSPESISISWSTLSKEALNGILQGFRVIYWANLIDGELGEIKNVTTTQPSLELDGLEKYTNYSIQVLAFTRAGDGVRSEQIFTRTKEDVPGPPAGVKAAAASASMVFVSWLPPLKLNGIIRKYTVFCSHPYPTVISEFEASPDSFSYRIPNLSRNRQYSVWVVAVTSAGRGNSSEIITVEPLAKAPARILTFSGTVTTPWMKDIVLPCKAVGDPSPAVKWMKDSNGTPSLVTIDGRRSIFSNGSFIIRTVKAEDSGYYSCVANNNWGSDEIILNLQVQVPPDQPRLTVSKTTSSSITLSWLPGDNGGSSIRGYILQYSEDNSEQWGSFPISPSERSYRLENLKCGTWYKFTLTAQNGVGPGRISEIIEAKTLGKEPQFSKEQELFASINTTRVRLNLIGWNDGGCPITSFTLEYRPFGTTVWTTAQRTSLSKSYILYDLQEATWYELQMRVCNSAGCAEKQANFATLNYDGSTIPPLIKSVVQSEEGLTTNEGLKILVTISCILVGVLLLFVLLLVVRRRRREQRLKRLRDAKSLAEMLMSKNTRTSDTLSKQQQTLRMHIDIPRAQLLIEERDTMETIDDRSTVLLTDADFGEAAKQKSLTVTHTVHYQSVSQATGPLVDVSDARPGTNPTTRRNAKAGPTARNRYASQWTLNRPHPTISAHTLTTDWRLPTPRATGSVDKESDSYSVSPSQDTDRARSSMVSTESASSTYEELARAYEHAKMEEQLRHAKFTITECFISDTSSEQLTAGTNEYTDSLTSSTPSESGICRFTASPPKPQDGGRVVNMAVPKAHRPGDLIHLPPYLRMDFLLNRGAPGTSRDLSLGQACLEPQKSRTLKRPTVLEPTPMEASSSTSSTREGQQSWQQGAVATLPQREGAELGQAAKMSSSQESLLDSRGHLKGNNPYAKSYTLV.

Residues M1–S17 form the signal peptide. Residues E18–K1594 lie on the Extracellular side of the membrane. Ig-like C2-type domains follow at residues P20–K119, P125–F216, P225–I305, P313–V401, P407–N500, P504–T592, P596–I685, P690–T783, and P787–Q883. 9 disulfides stabilise this stretch: C46/C102, C145/C197, C246/C293, C335/C385, C428/C484, C525/C575, C617/C669, C711/C766, and C809/C865. N78 is a glycosylation site (N-linked (GlcNAc...) asparagine). N470 carries an N-linked (GlcNAc...) asparagine glycan. Residue N666 is glycosylated (N-linked (GlcNAc...) asparagine). 4 consecutive Fibronectin type-III domains span residues P885–A982, P987–D1086, P1091–D1187, and P1191–P1285. 2 N-linked (GlcNAc...) asparagine glycosylation sites follow: N1160 and N1250. An Ig-like C2-type 10 domain is found at P1285 to Q1377. C1307 and C1359 form a disulfide bridge. Fibronectin type-III domains lie at P1379–K1473 and E1474–P1575. Residues I1595–V1615 traverse the membrane as a helical segment. The Cytoplasmic segment spans residues V1616–V2013. Residues V1616–V2013 form a required for netrin-mediated axon repulsion of neuronal growth cones region. Disordered stretches follow at residues L1718 to S1809 and R1920 to V2013. A compositionally biased stretch (low complexity) spans S1799 to S1809. The span at E1949–A1968 shows a compositional bias: polar residues.

As to quaternary structure, homodimer; mediates homophilic interactions to promote cell adhesion. Interacts with DCC; the interaction is abolished in response to NTN1. Interacts (via extracellular domain) with NTN1. Interacts (via extracellular domain) with UNC5C (via Ig-like C2-type domain). Interacts with PTK2. Interacts with FYN. Post-translationally, phosphorylated at tyrosine residues. Phosphorylation is enhanced by NTN1. As to expression, expressed in cortical and cerebellar neurons, in cells of the external and internal granular layer and of the Purkinje cell layer (at protein level). In the retina, expressed in dopaminergic and Nos1-positive amacrine cells and most retinal ganglion cells (at protein level). Expressed in the brain with highest levels in the cortex, olfactory bulb, hippocampus, thalamus, cerebellum and spinal cord. Expressed in the retinal ganglion layer (RGL).

It localises to the cell membrane. The protein localises to the cell projection. It is found in the axon. Its subcellular location is the synapse. The protein resides in the dendrite. It localises to the growth cone. In terms of biological role, cell adhesion molecule that plays a role in neuronal self-avoidance. Promotes repulsion between specific neuronal processes of either the same cell or the same subtype of cells. Mediates within retinal amacrine and ganglion cell subtypes both isoneuronal self-avoidance for creating an orderly dendritic arborization and heteroneuronal self-avoidance to maintain the mosaic spacing between amacrine and ganglion cell bodies. Receptor for netrin required for axon guidance independently of and in collaboration with the receptor DCC. Might also collaborate with UNC5C in NTN1-mediated axon repulsion independently of DCC. In spinal cord development plays a role in guiding commissural axons projection and pathfinding across the ventral midline to reach the floor plate upon ligand binding. Mediates intracellular signaling by stimulating the activation of MAPK8 and MAP kinase p38. Adhesion molecule that promotes lamina-specific synaptic connections in the retina: expressed in specific subsets of interneurons and retinal ganglion cells (RGCs) and promotes synaptic connectivity via homophilic interactions. The protein is Cell adhesion molecule DSCAM (Dscam) of Mus musculus (Mouse).